The sequence spans 215 residues: Leucyl/phenylalanyl-tRNA--protein transferase (215 aa).

Belongs to the L/F-transferase family.

Its subcellular location is the cytoplasm. It carries out the reaction N-terminal L-lysyl-[protein] + L-leucyl-tRNA(Leu) = N-terminal L-leucyl-L-lysyl-[protein] + tRNA(Leu) + H(+). The enzyme catalyses N-terminal L-arginyl-[protein] + L-leucyl-tRNA(Leu) = N-terminal L-leucyl-L-arginyl-[protein] + tRNA(Leu) + H(+). It catalyses the reaction L-phenylalanyl-tRNA(Phe) + an N-terminal L-alpha-aminoacyl-[protein] = an N-terminal L-phenylalanyl-L-alpha-aminoacyl-[protein] + tRNA(Phe). Functions in the N-end rule pathway of protein degradation where it conjugates Leu, Phe and, less efficiently, Met from aminoacyl-tRNAs to the N-termini of proteins containing an N-terminal arginine or lysine. In Campylobacter jejuni (strain RM1221), this protein is Leucyl/phenylalanyl-tRNA--protein transferase.